The sequence spans 122 residues: Small ribosomal subunit protein uS13 (122 aa).

The disordered stretch occupies residues 93–122 (RRGLPVRGQRTKTNARTRKGPKKTVAGKKK).

Belongs to the universal ribosomal protein uS13 family. As to quaternary structure, part of the 30S ribosomal subunit. Forms a loose heterodimer with protein S19. Forms two bridges to the 50S subunit in the 70S ribosome.

In terms of biological role, located at the top of the head of the 30S subunit, it contacts several helices of the 16S rRNA. In the 70S ribosome it contacts the 23S rRNA (bridge B1a) and protein L5 of the 50S subunit (bridge B1b), connecting the 2 subunits; these bridges are implicated in subunit movement. Contacts the tRNAs in the A and P-sites. The polypeptide is Small ribosomal subunit protein uS13 (Micrococcus luteus (strain ATCC 4698 / DSM 20030 / JCM 1464 / CCM 169 / CCUG 5858 / IAM 1056 / NBRC 3333 / NCIMB 9278 / NCTC 2665 / VKM Ac-2230) (Micrococcus lysodeikticus)).